The sequence spans 229 residues: Juvenile hormone-binding protein (229 aa).

The N-terminal stretch at V1–S3 is a signal peptide.

It localises to the secreted. Prevents juvenile hormone from being hydrolyzed by general esterases by combining with it specifically. This chain is Juvenile hormone-binding protein (JHBP), found in Manduca sexta (Tobacco hawkmoth).